Consider the following 675-residue polypeptide: Methionine--tRNA ligase (675 aa).

Positions 15 to 25 (PYANGSIHLGH) match the 'HIGH' region motif. C146, C149, C159, and C162 together coordinate Zn(2+). Positions 332-336 (KMSKS) match the 'KMSKS' region motif. K335 lines the ATP pocket. Residues 573–675 (DFAKIDMRIA…SGAKPGHQVK (103 aa)) form the tRNA-binding domain.

The protein belongs to the class-I aminoacyl-tRNA synthetase family. MetG type 1 subfamily. In terms of assembly, homodimer. Zn(2+) is required as a cofactor.

The protein resides in the cytoplasm. The catalysed reaction is tRNA(Met) + L-methionine + ATP = L-methionyl-tRNA(Met) + AMP + diphosphate. In terms of biological role, is required not only for elongation of protein synthesis but also for the initiation of all mRNA translation through initiator tRNA(fMet) aminoacylation. The protein is Methionine--tRNA ligase of Proteus mirabilis (strain HI4320).